The primary structure comprises 408 residues: Peptidase T (408 aa).

Zn(2+) is bound at residue histidine 79. Aspartate 81 is an active-site residue. Position 139 (aspartate 139) interacts with Zn(2+). The active-site Proton acceptor is glutamate 173. Residues glutamate 174, aspartate 196, and histidine 378 each contribute to the Zn(2+) site.

This sequence belongs to the peptidase M20B family. It depends on Zn(2+) as a cofactor.

Its subcellular location is the cytoplasm. The catalysed reaction is Release of the N-terminal residue from a tripeptide.. In terms of biological role, cleaves the N-terminal amino acid of tripeptides. The polypeptide is Peptidase T (Shouchella clausii (strain KSM-K16) (Alkalihalobacillus clausii)).